A 491-amino-acid polypeptide reads, in one-letter code: Ketol-acid reductoisomerase (NADP(+)) (491 aa).

The 195-residue stretch at 14 to 208 folds into the KARI N-terminal Rossmann domain; the sequence is LDQLGRCRFM…GGHRAGVLES (195 aa). NADP(+) contacts are provided by residues 45–48, Arg-68, Arg-76, Ser-78, and 108–110; these read CGAQ and DKQ. The active site involves His-132. Gly-158 is a binding site for NADP(+). 2 KARI C-terminal knotted domains span residues 209–344 and 345–485; these read SFVA…NAPK and YEGK…MTDM. 4 residues coordinate Mg(2+): Asp-217, Glu-221, Glu-389, and Glu-393. Ser-414 is a binding site for substrate.

This sequence belongs to the ketol-acid reductoisomerase family. It depends on Mg(2+) as a cofactor.

It carries out the reaction (2R)-2,3-dihydroxy-3-methylbutanoate + NADP(+) = (2S)-2-acetolactate + NADPH + H(+). The enzyme catalyses (2R,3R)-2,3-dihydroxy-3-methylpentanoate + NADP(+) = (S)-2-ethyl-2-hydroxy-3-oxobutanoate + NADPH + H(+). The protein operates within amino-acid biosynthesis; L-isoleucine biosynthesis; L-isoleucine from 2-oxobutanoate: step 2/4. It participates in amino-acid biosynthesis; L-valine biosynthesis; L-valine from pyruvate: step 2/4. In terms of biological role, involved in the biosynthesis of branched-chain amino acids (BCAA). Catalyzes an alkyl-migration followed by a ketol-acid reduction of (S)-2-acetolactate (S2AL) to yield (R)-2,3-dihydroxy-isovalerate. In the isomerase reaction, S2AL is rearranged via a Mg-dependent methyl migration to produce 3-hydroxy-3-methyl-2-ketobutyrate (HMKB). In the reductase reaction, this 2-ketoacid undergoes a metal-dependent reduction by NADPH to yield (R)-2,3-dihydroxy-isovalerate. In Pasteurella multocida (strain Pm70), this protein is Ketol-acid reductoisomerase (NADP(+)).